A 620-amino-acid polypeptide reads, in one-letter code: mRNA cap guanine-N(7) methyltransferase (620 aa).

Disordered stretches follow at residues 1-176 and 193-304; these read MLPP…APSS and AHAN…DDEY. The segment covering 29 to 44 has biased composition (polar residues); it reads RSPSMSLSPRSQNQSL. 2 stretches are compositionally biased toward low complexity: residues 45–60 and 136–157; these read PYPSSRPGSAAGSAHP and PQPTTTPSSPSTSQHTPYTPHH. One can recognise an mRNA cap 0 methyltransferase domain in the interval 345–620; sequence SPIIGLKKFN…LYMGFAFEKM (276 aa). Residue 354 to 355 coordinates mRNA; it reads NN. 6 residues coordinate S-adenosyl-L-methionine: Lys358, Gly377, Asp399, Asp428, Gln454, and Tyr459.

This sequence belongs to the class I-like SAM-binding methyltransferase superfamily. mRNA cap 0 methyltransferase family.

The protein resides in the nucleus. It carries out the reaction a 5'-end (5'-triphosphoguanosine)-ribonucleoside in mRNA + S-adenosyl-L-methionine = a 5'-end (N(7)-methyl 5'-triphosphoguanosine)-ribonucleoside in mRNA + S-adenosyl-L-homocysteine. Its function is as follows. Responsible for methylating the 5'-cap structure of mRNAs. The chain is mRNA cap guanine-N(7) methyltransferase (ABD1) from Cryptococcus neoformans var. neoformans serotype D (strain JEC21 / ATCC MYA-565) (Filobasidiella neoformans).